The following is a 502-amino-acid chain: Cobyric acid synthase (502 aa).

One can recognise a GATase cobBQ-type domain in the interval 260–433; the sequence is ILRVAVCAIP…WHGSLESDGF (174 aa). The active-site Nucleophile is Cys341. His425 is a catalytic residue.

It belongs to the CobB/CobQ family. CobQ subfamily.

It functions in the pathway cofactor biosynthesis; adenosylcobalamin biosynthesis. Functionally, catalyzes amidations at positions B, D, E, and G on adenosylcobyrinic A,C-diamide. NH(2) groups are provided by glutamine, and one molecule of ATP is hydrogenolyzed for each amidation. This is Cobyric acid synthase from Streptomyces avermitilis (strain ATCC 31267 / DSM 46492 / JCM 5070 / NBRC 14893 / NCIMB 12804 / NRRL 8165 / MA-4680).